We begin with the raw amino-acid sequence, 159 residues long: Bacterioferritin (159 aa).

The Ferritin-like diiron domain maps to 1 to 145 (MQGDPEVLRL…TQLELMDKLG (145 aa)). Positions 18 and 51 each coordinate Fe cation. Met-52 contributes to the heme b binding site. Residues His-54, Glu-94, Glu-127, and His-130 each contribute to the Fe cation site.

Belongs to the bacterioferritin family. As to quaternary structure, homooligomer of 24 subunits, arranged as 12 dimers, that are packed together to form an approximately spherical molecule with a central cavity, in which large amounts of iron can be deposited. It depends on heme b as a cofactor.

It catalyses the reaction 4 Fe(2+) + O2 + 4 H(+) = 4 Fe(3+) + 2 H2O. The enzyme catalyses Fe(2+)(in) = Fe(2+)(out). In terms of biological role, iron-storage protein, whose ferroxidase center binds Fe(2+), oxidizes it using dioxygen to Fe(3+), and participates in the subsequent Fe(3+) oxide mineral core formation within the central cavity of the BFR protein shell. This Mycolicibacterium paratuberculosis (strain ATCC BAA-968 / K-10) (Mycobacterium paratuberculosis) protein is Bacterioferritin (bfr).